The following is a 214-amino-acid chain: Melanoregulin (214 aa).

Residues 162 to 172 (LSERYLFVVDR) carry the Cholesterol-binding sequence motif motif. S213 is modified (phosphoserine).

Belongs to the melanoregulin family. In terms of assembly, identified in a complex with RILP and DCTN1; interacts directly with RILP, but does not interact directly with DCTN1. Interacts with PRPH2. In terms of processing, palmitoylated. Palmitoylation is required to maintain the protein at the melanosome membrane. Expressed in photoreceptor cells (at protein level).

The protein localises to the apical cell membrane. Its subcellular location is the melanosome membrane. It localises to the lysosome membrane. The protein resides in the cytoplasmic vesicle membrane. Probably functions as a cargo-recognition protein that couples cytoplasmic vesicles to the transport machinery. Plays a role in hair pigmentation, a process that involves shedding of melanosome-containing vesicles from melanocytes, followed by phagocytosis of the melanosome-containing vesicles by keratinocytes. Functions on melanosomes as receptor for RILP and the complex formed by RILP and DCTN1, and thereby contributes to retrograde melanosome transport from the cell periphery to the center. Overexpression causes accumulation of late endosomes and/or lysosomes at the microtubule organising center (MTOC) at the center of the cell. Probably binds cholesterol and requires the presence of cholesterol in membranes to function in microtubule-mediated retrograde organelle transport. Binds phosphatidylinositol 3-phosphate, phosphatidylinositol 4-phosphate, phosphatidylinositol 5-phosphate and phosphatidylinositol 3,5-bisphosphate, but not phosphatidylinositol 3,4-bisphosphate or phosphatidylinositol 4,5-bisphosphate. Required for normal phagosome clearing and normal activation of lysosomal enzymes in lysosomes from retinal pigment epithelium cells. Required for normal degradation of the lipofuscin component N-retinylidene-N-retinylethanolamine (A2E) in the eye. May function in membrane fusion and regulate the biogenesis of disk membranes of photoreceptor rod cells. The chain is Melanoregulin (MREG) from Homo sapiens (Human).